Here is a 370-residue protein sequence, read N- to C-terminus: DNA replication and repair protein RecF (370 aa).

30–37 (GENAQGKT) is a binding site for ATP.

Belongs to the RecF family.

It is found in the cytoplasm. Its function is as follows. The RecF protein is involved in DNA metabolism; it is required for DNA replication and normal SOS inducibility. RecF binds preferentially to single-stranded, linear DNA. It also seems to bind ATP. The sequence is that of DNA replication and repair protein RecF from Staphylococcus carnosus (strain TM300).